Consider the following 314-residue polypeptide: THAP domain-containing protein 11 (314 aa).

The THAP-type zinc-finger motif lies at 1 to 80 (MPGFTCCVPG…TYTVRVPTIF (80 aa)). The disordered stretch occupies residues 85–111 (VNERKVARRPAGAAAARRRQQQQQQQQ). The span at 93 to 111 (RPAGAAAARRRQQQQQQQQ) shows a compositional bias: low complexity. An HCFC1-binding motif (HBM) motif is present at residues 243-246 (DHSY). Residues 255–305 (EELLRKLNEQRDILALMEVKMKEMKGSIRHLRLTEAKLREELREKDRLLAM) adopt a coiled-coil conformation.

It belongs to the THAP11 family. Forms homodimers. Interacts via HBM with HCFC1. Forms a complex with HCFC1 and ZNF143. As to expression, expressed in skin fibroblasts.

The protein localises to the nucleus. Its subcellular location is the cytoplasm. Functionally, transcription factor, which has both transcriptional activation and repression activities. Also modulates chromatin accessibility. In complex with HCFC1 and ZNF143, regulates the expression of several genes, including AP2S1, ESCO2, OPHN1, RBL1, UBXN8 and ZNF32. May regulate the expression of genes that encode both cytoplasmic and mitochondrial ribosomal proteins. Required for normal mitochondrial development and function. Regulates mitochondrial gene expression, including that of components of the electron transport chain. Involved in the maintainance of pluripotency in early embryonic cells, possibly through its action on mitochondrial maturation which is required to meet high energy demands of these cells. Required for early development of retina, preventing premature exit of retinal progenitor cells from the cell cycle. This effect may also be mediated by its action on mitochondria. Through the regulation of MMACHC gene expression, controls cobalamin metabolism. Required for normal brain development and neural precursor differentiation. Involved in cell growth. The chain is THAP domain-containing protein 11 (THAP11) from Homo sapiens (Human).